A 132-amino-acid polypeptide reads, in one-letter code: Small ribosomal subunit protein uS8 (132 aa).

The protein belongs to the universal ribosomal protein uS8 family. In terms of assembly, part of the 30S ribosomal subunit. Contacts proteins S5 and S12.

In terms of biological role, one of the primary rRNA binding proteins, it binds directly to 16S rRNA central domain where it helps coordinate assembly of the platform of the 30S subunit. This is Small ribosomal subunit protein uS8 from Rhizobium etli (strain CIAT 652).